The chain runs to 411 residues: Pre-mRNA-splicing factor dre4 (411 aa).

Residues 3–36 (QPLPPGWTEHKAPSGIPYYWNAELKKSTYQRPSF) enclose the WW 1 domain. The disordered stretch occupies residues 65–84 (NAEERKNSRDLRKQLPDRPK). Basic and acidic residues predominate over residues 66–83 (AEERKNSRDLRKQLPDRP). Residues 89-122 (IPNNDSWVVVFTKKNRYFFHNLKSHESYWEPPLE) enclose the WW 2 domain. The tract at residues 138–209 (ISKDSSQSQN…KSHSAEELEF (72 aa)) is disordered. A compositionally biased stretch (polar residues) spans 140-151 (KDSSQSQNVDSG). The segment covering 152 to 166 (KTNHEEIHESRHLQT) has biased composition (basic and acidic residues). A compositionally biased stretch (acidic residues) spans 167–179 (EIEEPSGLEESSE). In terms of domain architecture, FF spans 239–293 (TDDARRVFTELLKDKNIGAYQPWELVYPKLLDDDRFYVLDSGERRKEVFEEYCKS).

Component of the spliceosomal complex. Interacts with prp19.

The protein resides in the nucleus. Its function is as follows. Component of the spliceosome involved in mRNA processing. This Schizosaccharomyces pombe (strain 972 / ATCC 24843) (Fission yeast) protein is Pre-mRNA-splicing factor dre4 (dre4).